The following is a 237-amino-acid chain: Uridylate kinase (237 aa).

Position 12–15 (12–15) interacts with ATP; it reads KLSG. The involved in allosteric activation by GTP stretch occupies residues 20 to 25; that stretch reads GDEGFG. Position 54 (Gly-54) interacts with UMP. Residues Gly-55 and Arg-59 each coordinate ATP. UMP contacts are provided by residues Asp-74 and 135–142; that span reads TGSPFFTT. ATP-binding residues include Thr-162, Tyr-168, and Asp-171.

Belongs to the UMP kinase family. In terms of assembly, homohexamer.

It is found in the cytoplasm. The catalysed reaction is UMP + ATP = UDP + ADP. The protein operates within pyrimidine metabolism; CTP biosynthesis via de novo pathway; UDP from UMP (UMPK route): step 1/1. With respect to regulation, allosterically activated by GTP. Inhibited by UTP. Its function is as follows. Catalyzes the reversible phosphorylation of UMP to UDP. The chain is Uridylate kinase from Mannheimia succiniciproducens (strain KCTC 0769BP / MBEL55E).